The sequence spans 388 residues: S-adenosylmethionine synthase (388 aa).

Residue histidine 16 participates in ATP binding. Aspartate 18 lines the Mg(2+) pocket. Residue glutamate 44 participates in K(+) binding. L-methionine contacts are provided by glutamate 57 and glutamine 100. The segment at 100–110 is flexible loop; sequence QSPDIAQGVNE. ATP-binding positions include 167-169, 233-234, aspartate 242, 248-249, and lysine 269; these read DGK, RF, and RK. Residue aspartate 242 participates in L-methionine binding. Lysine 273 contributes to the L-methionine binding site.

This sequence belongs to the AdoMet synthase family. Homotetramer; dimer of dimers. Mg(2+) is required as a cofactor. The cofactor is K(+).

Its subcellular location is the cytoplasm. It carries out the reaction L-methionine + ATP + H2O = S-adenosyl-L-methionine + phosphate + diphosphate. It functions in the pathway amino-acid biosynthesis; S-adenosyl-L-methionine biosynthesis; S-adenosyl-L-methionine from L-methionine: step 1/1. Catalyzes the formation of S-adenosylmethionine (AdoMet) from methionine and ATP. The overall synthetic reaction is composed of two sequential steps, AdoMet formation and the subsequent tripolyphosphate hydrolysis which occurs prior to release of AdoMet from the enzyme. In Desulfosudis oleivorans (strain DSM 6200 / JCM 39069 / Hxd3) (Desulfococcus oleovorans), this protein is S-adenosylmethionine synthase.